The sequence spans 134 residues: Small ribosomal subunit protein uS9 (134 aa).

Residues 109–134 (DARRTEPHKPSKSTKGPRAKRQKSYR) are disordered. Residues 118–134 (PSKSTKGPRAKRQKSYR) are compositionally biased toward basic residues.

This sequence belongs to the universal ribosomal protein uS9 family.

This Methanococcus aeolicus (strain ATCC BAA-1280 / DSM 17508 / OCM 812 / Nankai-3) protein is Small ribosomal subunit protein uS9.